Reading from the N-terminus, the 600-residue chain is Elongation factor 4 (600 aa).

One can recognise a tr-type G domain in the interval 6 to 188; sequence QFIRNFSIIA…QITKQIPSPK (183 aa). Residues 18-23 and 135-138 contribute to the GTP site; these read DHGKST and NKID.

The protein belongs to the TRAFAC class translation factor GTPase superfamily. Classic translation factor GTPase family. LepA subfamily.

Its subcellular location is the cell inner membrane. The catalysed reaction is GTP + H2O = GDP + phosphate + H(+). Required for accurate and efficient protein synthesis under certain stress conditions. May act as a fidelity factor of the translation reaction, by catalyzing a one-codon backward translocation of tRNAs on improperly translocated ribosomes. Back-translocation proceeds from a post-translocation (POST) complex to a pre-translocation (PRE) complex, thus giving elongation factor G a second chance to translocate the tRNAs correctly. Binds to ribosomes in a GTP-dependent manner. The protein is Elongation factor 4 of Leptospira interrogans serogroup Icterohaemorrhagiae serovar copenhageni (strain Fiocruz L1-130).